A 109-amino-acid chain; its full sequence is Juvenile hormone esterase, isoform A (109 aa).

It belongs to the type-B carboxylesterase/lipase family. As to expression, fat body, the site of their biosynthesis, and the hemolymph where it is secreted.

It carries out the reaction juvenile hormone I + H2O = juvenile hormone I carboxylate + methanol + H(+). The enzyme catalyses juvenile hormone III + H2O = juvenile hormone III carboxylate + methanol + H(+). Its function is as follows. JH esterase plays a crucial role in the decrease of JH activity in lepidopteran insects, by hydrolyzing the methyl ester of JH. It is also involved in the transport of JH. The chain is Juvenile hormone esterase, isoform A from Trichoplusia ni (Cabbage looper).